We begin with the raw amino-acid sequence, 274 residues long: Thiamine kinase (274 aa).

The protein belongs to the thiamine kinase family.

It carries out the reaction thiamine + ATP = thiamine phosphate + ADP + H(+). It participates in cofactor biosynthesis; thiamine diphosphate biosynthesis; thiamine phosphate from thiamine: step 1/1. Functionally, catalyzes the ATP-dependent phosphorylation of thiamine to thiamine phosphate. Is involved in thiamine salvage. In Salmonella newport (strain SL254), this protein is Thiamine kinase.